The chain runs to 79 residues: UPF0349 protein BCE33L4669 (79 aa).

Belongs to the UPF0349 family.

The chain is UPF0349 protein BCE33L4669 from Bacillus cereus (strain ZK / E33L).